The chain runs to 417 residues: MALLPFFDLTNFESDASEELGWLKYVGRVQTRVFPQHFKDNLEKVRKISETIDVIVDTTAELGPEACVNLLNAGALAILVNEEMLNELADISPNRLVLKTDTTDIGKIEKLSQVAGSIQWIGSAENYPPDFFERASKIIHKAVMPEGGGRTLYLEFPEQPSMEVLKSFSVHSVVPVLSSSFLTVKPAEEPKKLSLADLILISANTDREDGLFSTLVVNELGIALGLVYSSKESVAESLKTGTGVYQSRKRGLWYKGASSGAVQHLIHIDVDCDEDCLRFVVYQTGKGFCHLDTLHCFGQASGLCQLEKTLIDRKNNAPEGSYTARLFSDPKLLRAKIMEEAEELCDATTKENVIWEMADLMYFAITRCVGSGVSLNDISRHLDLKHRKVTRRKGDAKVAWQEKLKDKGGVANTSYTA.

Residues 225–299 form a phosphoribosyl-AMP cyclohydrolase region; sequence GLVYSSKESV…HLDTLHCFGQ (75 aa). Residues 303-387 form a phosphoribosyl-ATP pyrophosphohydrolase region; the sequence is LCQLEKTLID…ISRHLDLKHR (85 aa).

The protein resides in the cytoplasm. The enzyme catalyses 1-(5-phospho-beta-D-ribosyl)-5'-AMP + H2O = 1-(5-phospho-beta-D-ribosyl)-5-[(5-phospho-beta-D-ribosylamino)methylideneamino]imidazole-4-carboxamide. It catalyses the reaction 1-(5-phospho-beta-D-ribosyl)-ATP + H2O = 1-(5-phospho-beta-D-ribosyl)-5'-AMP + diphosphate + H(+). It participates in amino-acid biosynthesis; L-histidine biosynthesis; L-histidine from 5-phospho-alpha-D-ribose 1-diphosphate: step 2/9. Its pathway is amino-acid biosynthesis; L-histidine biosynthesis; L-histidine from 5-phospho-alpha-D-ribose 1-diphosphate: step 3/9. This Schizosaccharomyces pombe (strain 972 / ATCC 24843) (Fission yeast) protein is Histidine biosynthesis bifunctional protein his7.